A 460-amino-acid polypeptide reads, in one-letter code: Fumarate hydratase class II (460 aa).

Residues 95–97, 126–129, 136–138, and Thr184 contribute to the substrate site; these read SGT, HPND, and SSN. His185 serves as the catalytic Proton donor/acceptor. Ser315 is a catalytic residue. Substrate contacts are provided by residues Ser316 and 321–323; that span reads KIN.

Belongs to the class-II fumarase/aspartase family. Fumarase subfamily. In terms of assembly, homotetramer.

The protein localises to the cytoplasm. It catalyses the reaction (S)-malate = fumarate + H2O. The protein operates within carbohydrate metabolism; tricarboxylic acid cycle; (S)-malate from fumarate: step 1/1. Its function is as follows. Involved in the TCA cycle. Catalyzes the stereospecific interconversion of fumarate to L-malate. In Chlamydia caviae (strain ATCC VR-813 / DSM 19441 / 03DC25 / GPIC) (Chlamydophila caviae), this protein is Fumarate hydratase class II.